The following is a 223-amino-acid chain: Ribose-5-phosphate isomerase A (223 aa).

Residues 32-35, 85-88, and 98-101 contribute to the substrate site; these read TGST, DGAD, and KGGG. The active-site Proton acceptor is the Glu107. Residue Lys125 coordinates substrate.

It belongs to the ribose 5-phosphate isomerase family. As to quaternary structure, homodimer.

It catalyses the reaction aldehydo-D-ribose 5-phosphate = D-ribulose 5-phosphate. It functions in the pathway carbohydrate degradation; pentose phosphate pathway; D-ribose 5-phosphate from D-ribulose 5-phosphate (non-oxidative stage): step 1/1. Functionally, catalyzes the reversible conversion of ribose-5-phosphate to ribulose 5-phosphate. The polypeptide is Ribose-5-phosphate isomerase A (Stutzerimonas stutzeri (strain A1501) (Pseudomonas stutzeri)).